Reading from the N-terminus, the 230-residue chain is Probable tetraspanin tspD (230 aa).

At Met1–Asn20 the chain is on the cytoplasmic side. Residues Val21–Phe41 form a helical membrane-spanning segment. The Extracellular portion of the chain corresponds to Ser42–Pro65. A helical membrane pass occupies residues Ala66 to Ala86. Over Tyr87 to Lys90 the chain is Cytoplasmic. The helical transmembrane segment at Met91–Ile111 threads the bilayer. Residues Gly112 to Ser200 are Extracellular-facing. Residues Asn133, Asn138, Asn163, and Asn179 are each glycosylated (N-linked (GlcNAc...) asparagine). A helical transmembrane segment spans residues Ala201–Val221. Over Arg222–Arg230 the chain is Cytoplasmic.

It belongs to the tetraspanin (TM4SF) family.

Its subcellular location is the membrane. This chain is Probable tetraspanin tspD (tspD), found in Dictyostelium discoideum (Social amoeba).